The following is a 109-amino-acid chain: U4-lycotoxin-Ls1b (109 aa).

Positions 1 to 22 are cleaved as a signal peptide; it reads MKVLVLFSVLFLTLFSYSSTEA. Residues 23 to 44 constitute a propeptide that is removed on maturation; sequence IDEFDSDAEDDMLSLMANEQVR. Positions 45 to 88 are knottin domain; that stretch reads AKACTPRLHDCSHDRHSCCRGELSKDVCYCFYPEGEDKTEVCSC. 4 disulfide bridges follow: cysteine 48–cysteine 63, cysteine 55–cysteine 72, cysteine 62–cysteine 88, and cysteine 74–cysteine 86. Positions 89–108 are linear cationic cytotoxin domain; that stretch reads QQPKSHKYIEKVVDKAKTVV.

Belongs to the neurotoxin 19 (CSTX) family. 05 (U4-Lctx) subfamily. In terms of tissue distribution, expressed by the venom gland.

The protein localises to the secreted. Functionally, enhances the high-affinity desensitization of human P2RX3 purinoceptors. This chain is U4-lycotoxin-Ls1b, found in Lycosa singoriensis (Wolf spider).